The primary structure comprises 358 residues: Snurportin-1 (358 aa).

Met-1 bears the N-acetylmethionine mark. Disordered stretches follow at residues 1–39 (MEEL…SSLE) and 69–89 (DWTG…EMDL). The segment at 1–65 (MEELSQALAS…LDYVNHARRL (65 aa)) is necessary for interaction with KPNB1 and m3G-cap U1 and U5 snRNP import receptor activity. The segment at 1 to 160 (MEELSQALAS…NRFSSLLPGG (160 aa)) is necessary for interaction with XPO1. Composition is skewed to polar residues over residues 7-22 (ALAS…NSTA) and 30-39 (QYKSKYSSLE). Residues 11-73 (SFSVSQELNS…RLAEDDWTGM (63 aa)) enclose the IBB domain. Ser-75 is modified (phosphoserine). The interaction with m3G-cap structure stretch occupies residues 128–130 (GKR). The tract at residues 210–329 (MNSKLPEEEG…DTKEKLTHKA (120 aa)) is necessary for binding to the m3G-cap structure. Basic and acidic residues predominate over residues 315–341 (KRSQEDTKEKLTHKASENGHYELEHLS). The segment at 315-358 (KRSQEDTKEKLTHKASENGHYELEHLSTPKLRSPPHSSESLMDS) is disordered. The span at 349–358 (PHSSESLMDS) shows a compositional bias: polar residues. Ser-351 carries the phosphoserine modification.

Belongs to the snurportin family. Component of an import snRNP complex composed of KPNB1, SNUPN, SMN1 and ZNF259. Component of a nuclear export receptor complex composed of KPNB1, Ran, SNUPN and XPO1. Found in a trimeric export complex with SNUPN, Ran and XPO1. Interacts (via IBB domain) with KPNB1; the interaction is direct. Interacts with DDX20, IPO7, SMN1, SNRPB and XPO1. Interacts directly with XPO1. Its interaction with XPO1 and binding to m3G-cap U snRNPs appears to be mutually exclusive. Can form homomers.

It localises to the nucleus. The protein localises to the cytoplasm. Functions as an U snRNP-specific nuclear import adapter. Involved in the trimethylguanosine (m3G)-cap-dependent nuclear import of U snRNPs. Binds specifically to the terminal m3G-cap U snRNAs. The polypeptide is Snurportin-1 (Snupn) (Rattus norvegicus (Rat)).